The chain runs to 202 residues: CASP-like protein 2U7 (202 aa).

The Cytoplasmic segment spans residues 1-10; the sequence is MLELYEKRRA. The chain crosses the membrane as a helical span at residues 11 to 31; sequence LLLLRLAAMFLSLAALLITVL. Topologically, residues 32-64 are extracellular; that stretch reads NREDGFFSINVFGSPQPILTKATADFTLVKGLK. The chain crosses the membrane as a helical span at residues 65–85; the sequence is FFAGAMGIVAGYSFLQLAIAM. The Cytoplasmic segment spans residues 86 to 101; sequence ASMFSGAPSILGGKRM. A helical transmembrane segment spans residues 102–122; the sequence is AWLCFVGDMTASHLCAAAAAV. Over 123–148 the chain is Extracellular; it reads SAQLAYLGKRGAPMWSAVCTYFSHYC. A helical membrane pass occupies residues 149–169; it reads LVFGLAVIFAFLATLAALLVA. The Cytoplasmic segment spans residues 170–202; sequence SISSYHLFRLHGILQQQQQQRRQLQQEHVQDKP.

This sequence belongs to the Casparian strip membrane proteins (CASP) family. Homodimer and heterodimers.

It localises to the cell membrane. This Selaginella moellendorffii (Spikemoss) protein is CASP-like protein 2U7.